Consider the following 205-residue polypeptide: Putative lipoprotein LppC (205 aa).

Residues methionine 1–glycine 27 form the signal peptide. Residue cysteine 28 is the site of N-palmitoyl cysteine attachment. Cysteine 28 is lipidated: S-diacylglycerol cysteine. The interval glycine 126–glycine 145 is disordered.

Belongs to the UPF0098 family.

It is found in the cell membrane. The chain is Putative lipoprotein LppC (lppC) from Mycobacterium tuberculosis (strain CDC 1551 / Oshkosh).